The chain runs to 155 residues: Ribonuclease H (155 aa).

One can recognise an RNase H type-1 domain in the interval 1-146; it reads MNALFAWTDG…ADELARAGMA (146 aa). Mg(2+) contacts are provided by D9, E52, D74, and D138.

Belongs to the RNase H family. As to quaternary structure, monomer. Mg(2+) serves as cofactor.

It localises to the cytoplasm. The catalysed reaction is Endonucleolytic cleavage to 5'-phosphomonoester.. Endonuclease that specifically degrades the RNA of RNA-DNA hybrids. This Paracoccus denitrificans (strain Pd 1222) protein is Ribonuclease H.